The following is a 987-amino-acid chain: Mediator of RNA polymerase II transcription subunit 24 (987 aa).

Short sequence motifs (LXXLL motif) lie at residues 128-132 (LHWLL), 344-348 (LTPLL), 446-450 (LDLLL), 555-559 (LVALL), 786-790 (LPGLL), and 855-859 (LMRLL). 2 positions are modified to phosphoserine: serine 860 and serine 871.

The protein belongs to the Mediator complex subunit 24 family. In terms of assembly, component of the Mediator complex, which is composed of MED1, MED4, MED6, MED7, MED8, MED9, MED10, MED11, MED12, MED13, MED13L, MED14, MED15, MED16, MED17, MED18, MED19, MED20, MED21, MED22, MED23, MED24, MED25, MED26, MED27, MED29, MED30, MED31, CCNC, CDK8 and CDC2L6/CDK11. The MED12, MED13, CCNC and CDK8 subunits form a distinct module termed the CDK8 module. Mediator containing the CDK8 module is less active than Mediator lacking this module in supporting transcriptional activation. Individual preparations of the Mediator complex lacking one or more distinct subunits have been variously termed ARC, CRSP, DRIP, PC2, SMCC and TRAP. Interacts with AR. Interacts with MED1 and MED10. As to expression, expressed in the adrenal gland, brain, epididymis, heart, kidney, liver, ovary, pancreas, prostate, skeletal muscle, small intestine, spleen, stomach, testis and thymus.

The protein resides in the nucleus. Component of the Mediator complex, a coactivator involved in the regulated transcription of nearly all RNA polymerase II-dependent genes. Mediator functions as a bridge to convey information from gene-specific regulatory proteins to the basal RNA polymerase II transcription machinery. Mediator is recruited to promoters by direct interactions with regulatory proteins and serves as a scaffold for the assembly of a functional preinitiation complex with RNA polymerase II and the general transcription factors. Required for basal and activator-dependent transcription. The protein is Mediator of RNA polymerase II transcription subunit 24 (Med24) of Mus musculus (Mouse).